The chain runs to 795 residues: Phenylalanine--tRNA ligase beta subunit (795 aa).

Residues 39 to 148 (AGTFNGVKVG…IDAPIGMDFR (110 aa)) form the tRNA-binding domain. Residues 401-476 (PKPNKVALRR…RIYGYDNIPN (76 aa)) form the B5 domain. Residues Asp-454, Asp-460, Glu-463, and Glu-464 each coordinate Mg(2+). An FDX-ACB domain is found at 701–794 (SKFPANRRDI…VSEKFGASLR (94 aa)).

It belongs to the phenylalanyl-tRNA synthetase beta subunit family. Type 1 subfamily. Tetramer of two alpha and two beta subunits. Mg(2+) is required as a cofactor.

It localises to the cytoplasm. The catalysed reaction is tRNA(Phe) + L-phenylalanine + ATP = L-phenylalanyl-tRNA(Phe) + AMP + diphosphate + H(+). The sequence is that of Phenylalanine--tRNA ligase beta subunit from Vibrio vulnificus (strain CMCP6).